The following is a 93-amino-acid chain: MKKTLILLAMVAALMILPFFINHGGEFGGSDGEAESQIQVVAPDYQPWFQPLYEPASGEIESLLFTLQGSLGAAVIFYILGYARGRQRRDDRV.

Helical transmembrane passes span 5 to 25 (LILL…NHGG) and 63 to 83 (LLFT…LGYA).

It belongs to the CbiN family. As to quaternary structure, forms an energy-coupling factor (ECF) transporter complex composed of an ATP-binding protein (A component, CbiO), a transmembrane protein (T component, CbiQ) and 2 possible substrate-capture proteins (S components, CbiM and CbiN) of unknown stoichimetry.

It localises to the cell inner membrane. The protein operates within cofactor biosynthesis; adenosylcobalamin biosynthesis. Functionally, part of the energy-coupling factor (ECF) transporter complex CbiMNOQ involved in cobalt import. The chain is Cobalt transport protein CbiN from Klebsiella pneumoniae subsp. pneumoniae (strain ATCC 700721 / MGH 78578).